Reading from the N-terminus, the 440-residue chain is 3-phosphoshikimate 1-carboxyvinyltransferase (440 aa).

3-phosphoshikimate contacts are provided by Lys19, Ser20, and Arg24. Residue Lys19 coordinates phosphoenolpyruvate. The phosphoenolpyruvate site is built by Gly92 and Arg121. Residues Ser166, Gln168, Asp315, and Lys342 each contribute to the 3-phosphoshikimate site. Gln168 is a binding site for phosphoenolpyruvate. Asp315 serves as the catalytic Proton acceptor. The phosphoenolpyruvate site is built by Arg346 and Arg399.

Belongs to the EPSP synthase family. In terms of assembly, monomer.

It localises to the cytoplasm. It carries out the reaction 3-phosphoshikimate + phosphoenolpyruvate = 5-O-(1-carboxyvinyl)-3-phosphoshikimate + phosphate. The protein operates within metabolic intermediate biosynthesis; chorismate biosynthesis; chorismate from D-erythrose 4-phosphate and phosphoenolpyruvate: step 6/7. Catalyzes the transfer of the enolpyruvyl moiety of phosphoenolpyruvate (PEP) to the 5-hydroxyl of shikimate-3-phosphate (S3P) to produce enolpyruvyl shikimate-3-phosphate and inorganic phosphate. This Leptospira interrogans serogroup Icterohaemorrhagiae serovar copenhageni (strain Fiocruz L1-130) protein is 3-phosphoshikimate 1-carboxyvinyltransferase.